Here is a 443-residue protein sequence, read N- to C-terminus: GTPase Der (443 aa).

2 consecutive EngA-type G domains span residues 3-167 (PTLV…PEPE) and 176-349 (VRVA…AAAM). GTP-binding positions include 9 to 16 (GRPNVGKS), 56 to 60 (DTGGF), 119 to 122 (NKAE), 182 to 189 (GRPNVGKS), 229 to 233 (DTAGM), and 294 to 297 (NKWD). The KH-like domain maps to 350–434 (AKMTTPRLTR…PLRIQFVTAK (85 aa)).

The protein belongs to the TRAFAC class TrmE-Era-EngA-EngB-Septin-like GTPase superfamily. EngA (Der) GTPase family. In terms of assembly, associates with the 50S ribosomal subunit.

Its function is as follows. GTPase that plays an essential role in the late steps of ribosome biogenesis. The sequence is that of GTPase Der from Dechloromonas aromatica (strain RCB).